The sequence spans 362 residues: S-adenosylmethionine decarboxylase proenzyme (362 aa).

Residues glutamate 13 and glutamate 16 contribute to the active site. Catalysis depends on serine 73, which acts as the Schiff-base intermediate with substrate; via pyruvic acid. Serine 73 is modified (pyruvic acid (Ser); by autocatalysis). Cysteine 87 functions as the Proton donor; for catalytic activity in the catalytic mechanism. Active-site proton acceptor; for processing activity residues include serine 236 and histidine 249.

The protein belongs to the eukaryotic AdoMetDC family. Pyruvate is required as a cofactor. Post-translationally, is synthesized initially as an inactive proenzyme. Formation of the active enzyme involves a self-maturation process in which the active site pyruvoyl group is generated from an internal serine residue via an autocatalytic post-translational modification. Two non-identical subunits are generated from the proenzyme in this reaction, and the pyruvate is formed at the N-terminus of the alpha chain, which is derived from the carboxyl end of the proenzyme. The post-translation cleavage follows an unusual pathway, termed non-hydrolytic serinolysis, in which the side chain hydroxyl group of the serine supplies its oxygen atom to form the C-terminus of the beta chain, while the remainder of the serine residue undergoes an oxidative deamination to produce ammonia and the pyruvoyl group blocking the N-terminus of the alpha chain.

It carries out the reaction S-adenosyl-L-methionine + H(+) = S-adenosyl 3-(methylsulfanyl)propylamine + CO2. Its pathway is amine and polyamine biosynthesis; S-adenosylmethioninamine biosynthesis; S-adenosylmethioninamine from S-adenosyl-L-methionine: step 1/1. The polypeptide is S-adenosylmethionine decarboxylase proenzyme (SAMDC) (Datura stramonium (Jimsonweed)).